We begin with the raw amino-acid sequence, 1413 residues long: Alpha-latrocrustotoxin-Lt1a (1413 aa).

A propeptide spanning residues 1 to 28 is cleaved from the precursor; it reads VSIFIFHFSANILVRNSEMKGKRVISKR. The helix H8 is the probable transmembrane region of the tetrameric pore inserted in the target cell membrane stretch occupies residues 238–257; it reads ALFALFYGTQTFISIMFYLV. ANK repeat units lie at residues 457–490, 494–524, 528–557, 562–592, 596–625, 629–658, 664–694, 699–729, 733–762, 766–795, 799–828, 832–861, 866–895, 899–928, 965–995, 996–1026, 1031–1072, 1077–1106, 1109–1139, and 1143–1172; these read DIHR…QVGA, MGRK…LLNV, NGYT…DVNV, NELT…DVNA, AGFT…GINI, SGLT…KVKL, NGMT…DVNA, KNWT…DIST, QAIT…VVDQ, NGFT…NINA, DGST…NIKA, INQM…SLMN, RDEY…DVNE, DGNT…DFRL, RGKT…TLNE, DQCS…NPTA, NQVS…DINK, QQST…DPNK, RGDP…DVNT, and EQFT…DVNA. Positions 1193–1413 are excised as a propeptide; that stretch reads RSLGRRFFRN…NRPTNVLQIK (221 aa).

This sequence belongs to the cationic peptide 01 (latrotoxin) family. 01 (alpha-latrocrustotoxin) subfamily. As to quaternary structure, homotetramer in membranes. Expressed by the venom gland.

It localises to the secreted. Its subcellular location is the target cell membrane. In terms of biological role, crustacean-selective presynaptic neurotoxin that induces neurotransmitter exocytosis. May bind to crustacean neurexin-1 homolog, adhesion G protein-coupled receptor L1 homolog, and receptor-type tyrosine-protein phosphatase S homolog, and induces neurotransmitter exocytosis both by forming tetrameric pores in membranes and signaling via G protein-coupled receptor. This recombinant protein form channels in artificial membrane bilayers, that are stabilized by calcium ions and allow calcium flux at negative membrane potentials. The sequence is that of Alpha-latrocrustotoxin-Lt1a from Latrodectus tredecimguttatus (Mediterranean black widow spider).